Here is a 321-residue protein sequence, read N- to C-terminus: D-alanine--D-alanine ligase (321 aa).

The 195-residue stretch at 121–315 (RSWFLTNNIN…FVNLIEEILK (195 aa)) folds into the ATP-grasp domain. 148–199 (IKRPYVIKPFTQGSSIGVEVIFEEDDFNFANYDFPYGDEVIIEKYIKGRELQ) contacts ATP. Residues glutamate 268, glutamate 282, and asparagine 284 each coordinate Mg(2+).

It belongs to the D-alanine--D-alanine ligase family. Requires Mg(2+) as cofactor. Mn(2+) serves as cofactor.

It is found in the cytoplasm. It carries out the reaction 2 D-alanine + ATP = D-alanyl-D-alanine + ADP + phosphate + H(+). It participates in cell wall biogenesis; peptidoglycan biosynthesis. In terms of biological role, cell wall formation. In Rickettsia bellii (strain RML369-C), this protein is D-alanine--D-alanine ligase.